Consider the following 284-residue polypeptide: Bifunctional protein FolD 1 (284 aa).

Residues 166–168 (GAS) and Ile-232 contribute to the NADP(+) site.

The protein belongs to the tetrahydrofolate dehydrogenase/cyclohydrolase family. As to quaternary structure, homodimer.

It catalyses the reaction (6R)-5,10-methylene-5,6,7,8-tetrahydrofolate + NADP(+) = (6R)-5,10-methenyltetrahydrofolate + NADPH. It carries out the reaction (6R)-5,10-methenyltetrahydrofolate + H2O = (6R)-10-formyltetrahydrofolate + H(+). It functions in the pathway one-carbon metabolism; tetrahydrofolate interconversion. Catalyzes the oxidation of 5,10-methylenetetrahydrofolate to 5,10-methenyltetrahydrofolate and then the hydrolysis of 5,10-methenyltetrahydrofolate to 10-formyltetrahydrofolate. This chain is Bifunctional protein FolD 1, found in Pseudomonas syringae pv. tomato (strain ATCC BAA-871 / DC3000).